The sequence spans 138 residues: Rapid alkalinization factor 23 (138 aa).

Positions 1-28 are cleaved as a signal peptide; that stretch reads MRGLSRNSGAAAIFAILLILAVHNWSVA. Positions 29–88 are cleaved as a propeptide — removed in mature form; sequence VSSQSTEFAGDFPPFETECRGTIAECSVSAALGDGGDLFYGGGEMGEEFEMDSEINRRIL. Cystine bridges form between Cys-106–Cys-116 and Cys-129–Cys-135.

It belongs to the plant rapid alkalinization factor (RALF) family. In terms of processing, proteolytically cleaved, probably by SBT6.1 (S1P), a subtilisin-like serine protease (subtilase).

The protein resides in the secreted. Its function is as follows. Cell signaling peptide that may regulate plant stress, growth, and development. Mediates a rapid alkalinization of extracellular space by mediating a transient increase in the cytoplasmic Ca(2+) concentration leading to a calcium-dependent signaling events through a cell surface receptor and a concomitant activation of some intracellular mitogen-activated protein kinases. Negatively regulates brassinolide (BL)-mediated signaling pathway (e.g. BL-induced hypocotyl elongation and branching limitation). In Arabidopsis thaliana (Mouse-ear cress), this protein is Rapid alkalinization factor 23 (RALF23).